The sequence spans 459 residues: tRNA modification GTPase MnmE (459 aa).

Arg-22, Glu-85, and Arg-124 together coordinate (6S)-5-formyl-5,6,7,8-tetrahydrofolate. The region spanning Gly-221–Phe-380 is the TrmE-type G domain. Position 231 (Asn-231) interacts with K(+). Residues Asn-231–Ser-236, Thr-250–Thr-256, and Asp-275–Gly-278 each bind GTP. Residue Ser-235 coordinates Mg(2+). The K(+) site is built by Thr-250, Val-252, and Thr-255. Thr-256 contacts Mg(2+). Lys-459 is a (6S)-5-formyl-5,6,7,8-tetrahydrofolate binding site.

This sequence belongs to the TRAFAC class TrmE-Era-EngA-EngB-Septin-like GTPase superfamily. TrmE GTPase family. In terms of assembly, homodimer. Heterotetramer of two MnmE and two MnmG subunits. The cofactor is K(+).

Its subcellular location is the cytoplasm. Its function is as follows. Exhibits a very high intrinsic GTPase hydrolysis rate. Involved in the addition of a carboxymethylaminomethyl (cmnm) group at the wobble position (U34) of certain tRNAs, forming tRNA-cmnm(5)s(2)U34. The polypeptide is tRNA modification GTPase MnmE (Staphylococcus haemolyticus (strain JCSC1435)).